Here is a 231-residue protein sequence, read N- to C-terminus: Large ribosomal subunit protein uL1 (231 aa).

The protein belongs to the universal ribosomal protein uL1 family. As to quaternary structure, part of the 50S ribosomal subunit.

In terms of biological role, binds directly to 23S rRNA. The L1 stalk is quite mobile in the ribosome, and is involved in E site tRNA release. Its function is as follows. Protein L1 is also a translational repressor protein, it controls the translation of the L11 operon by binding to its mRNA. The sequence is that of Large ribosomal subunit protein uL1 from Francisella philomiragia subsp. philomiragia (strain ATCC 25017 / CCUG 19701 / FSC 153 / O#319-036).